The sequence spans 81 residues: Photosystem I iron-sulfur center (81 aa).

2 consecutive 4Fe-4S ferredoxin-type domains span residues 2-31 (SHSVKIYDTCIGCTQCVRACPLDVLEMVPW) and 39-68 (IAASPRTEDCVGCKRCETACPTDFLSIRVY). 8 residues coordinate [4Fe-4S] cluster: C11, C14, C17, C21, C48, C51, C54, and C58.

In terms of assembly, the cyanobacterial PSI reaction center is composed of one copy each of PsaA,B,C,D,E,F,I,J,K,L,M and X, and forms trimeric complexes. Requires [4Fe-4S] cluster as cofactor.

It localises to the cellular thylakoid membrane. The enzyme catalyses reduced [plastocyanin] + hnu + oxidized [2Fe-2S]-[ferredoxin] = oxidized [plastocyanin] + reduced [2Fe-2S]-[ferredoxin]. Its function is as follows. Apoprotein for the two 4Fe-4S centers FA and FB of photosystem I (PSI); essential for photochemical activity. FB is the terminal electron acceptor of PSI, donating electrons to ferredoxin. The C-terminus interacts with PsaA/B/D and helps assemble the protein into the PSI complex. Required for binding of PsaD and PsaE to PSI. PSI is a plastocyanin/cytochrome c6-ferredoxin oxidoreductase, converting photonic excitation into a charge separation, which transfers an electron from the donor P700 chlorophyll pair to the spectroscopically characterized acceptors A0, A1, FX, FA and FB in turn. This is Photosystem I iron-sulfur center from Synechococcus elongatus (strain ATCC 33912 / PCC 7942 / FACHB-805) (Anacystis nidulans R2).